The chain runs to 201 residues: Guanylyl cyclase-activating protein 1 (201 aa).

The N-myristoyl glycine moiety is linked to residue Gly2. Position 3 is a deamidated asparagine (Asn3). EF-hand domains lie at 31-49 (SGQLTLYEFRQFFGLKNLS), 51-86 (SASQYVEQMFETFDFNKDGYIDFMEYVAALSLVLKG), 87-122 (KVEQKLRWYFKLYDVDGNGCIDRDELLTIIQAIRAI), and 131-166 (TAEEFTDTVFSKIDVNGDGELSLEEFIEGVQKDQML). Positions 64, 66, 68, 70, 75, 100, 102, 104, 106, 111, 144, 146, 148, 150, and 155 each coordinate Ca(2+).

As to quaternary structure, homodimer. As to expression, in the retina, it is expressed in rod and cone photoreceptors.

The protein resides in the membrane. The protein localises to the photoreceptor inner segment. Its subcellular location is the cell projection. It localises to the cilium. It is found in the photoreceptor outer segment. In terms of biological role, stimulates retinal guanylyl cyclase when free calcium ions concentration is low and inhibits guanylyl cyclase when free calcium ions concentration is elevated. This Ca(2+)-sensitive regulation of retinal guanylyl cyclase is a key event in recovery of the dark state of rod photoreceptors following light exposure. May be involved in cone photoreceptor light response and recovery of response in bright light. The protein is Guanylyl cyclase-activating protein 1 (GUCA1A) of Homo sapiens (Human).